Consider the following 1158-residue polypeptide: Rho1 guanine nucleotide exchange factor 2 (1158 aa).

Positions 42-141 (RSSGSITHSP…SFSVSDVSNG (100 aa)) are disordered. The segment covering 45–63 (GSITHSPTALSSTTSLNEN) has biased composition (polar residues). Residues 68-81 (FRPASSLSFSPSSL) show a composition bias toward low complexity. A compositionally biased stretch (polar residues) spans 97-108 (KNNFYRRSSSTD). Low complexity predominate over residues 132–141 (SFSVSDVSNG). A DH domain is found at 447–634 (KRQEIIFEVI…REFLTKLNYE (188 aa)). The region spanning 670 to 805 (LIFKGVVKLK…QHIEKQQDII (136 aa)) is the PH domain. A phosphoserine mark is found at S746 and S747. In terms of domain architecture, CNH spans 825-1120 (GNKLLCAVAY…KLLTDGRGLI (296 aa)).

The protein resides in the cytoplasm. Functionally, stimulates the exchange of Rho1 and Rho5 GDP-bound form into GTP-bound form. Controls septum formation, cell wall synthesis and localization of F-actin patches. The polypeptide is Rho1 guanine nucleotide exchange factor 2 (rgf2) (Schizosaccharomyces pombe (strain 972 / ATCC 24843) (Fission yeast)).